The following is a 194-amino-acid chain: Adenylate kinase isoenzyme 1 (194 aa).

Position 19-24 (19-24) interacts with ATP; the sequence is GSGKGT. Residues 39 to 68 form an NMP region; the sequence is STGDLLRAEVSSGSERGKKLQAIMEKGELV. Residues Thr-40, Arg-45, 66–68, 95–98, and Gln-102 contribute to the AMP site; these read ELV and GYPR. Residues 132–142 are LID; the sequence is KRGETSGRVDD. Arg-133 is a binding site for ATP. AMP contacts are provided by Arg-139 and Arg-150. Gly-178 contacts ATP.

Belongs to the adenylate kinase family. AK1 subfamily. In terms of assembly, monomer. Mg(2+) serves as cofactor. In terms of tissue distribution, skeletal muscle.

The protein localises to the cytoplasm. It catalyses the reaction a ribonucleoside 5'-phosphate + ATP = a ribonucleoside 5'-diphosphate + ADP. It carries out the reaction AMP + ATP = 2 ADP. The catalysed reaction is dAMP + ATP = dADP + ADP. The enzyme catalyses dATP + AMP = dADP + ADP. It catalyses the reaction dAMP + dATP = 2 dADP. It carries out the reaction a 2'-deoxyribonucleoside 5'-diphosphate + ATP = a 2'-deoxyribonucleoside 5'-triphosphate + ADP. The catalysed reaction is a ribonucleoside 5'-diphosphate + ATP = a ribonucleoside 5'-triphosphate + ADP. The enzyme catalyses CDP + GTP = CTP + GDP. It catalyses the reaction GDP + ATP = GTP + ADP. It carries out the reaction UDP + ATP = UTP + ADP. The catalysed reaction is GTP + UDP = UTP + GDP. The enzyme catalyses dTDP + GTP = dTTP + GDP. It catalyses the reaction dCDP + GTP = dCTP + GDP. It carries out the reaction dGDP + ATP = dGTP + ADP. The catalysed reaction is dADP + GTP = dATP + GDP. The enzyme catalyses thiamine diphosphate + ADP = thiamine triphosphate + AMP. Functionally, catalyzes the reversible transfer of the terminal phosphate group between ATP and AMP. Also displays broad nucleoside diphosphate kinase activity. Plays an important role in cellular energy homeostasis and in adenine nucleotide metabolism. Also catalyzes at a very low rate the synthesis of thiamine triphosphate (ThTP) from thiamine diphosphate (ThDP) and ADP. The chain is Adenylate kinase isoenzyme 1 from Gallus gallus (Chicken).